Reading from the N-terminus, the 231-residue chain is NADH-ubiquinone oxidoreductase chain 4 (231 aa).

7 helical membrane-spanning segments follow: residues 1–21 (PIAGSMVLAAILLKLGGYGII), 34–54 (LFLPFIVLALWGAILANLTCL), 63–85 (IAYSSISHMGLVVAAIIIQTPWG), 89–111 (AMALMIAHGFTSSALFCLANTTY), 128–148 (ILPMATTWWLVTNLMNIAIPP), 156–176 (LLIMSALFNWCPTTIIMLGLS), and 211–231 (LLIALHLAPLLMISLKPELVI).

Belongs to the complex I subunit 4 family.

It is found in the mitochondrion membrane. The enzyme catalyses a ubiquinone + NADH + 5 H(+)(in) = a ubiquinol + NAD(+) + 4 H(+)(out). Core subunit of the mitochondrial membrane respiratory chain NADH dehydrogenase (Complex I) that is believed to belong to the minimal assembly required for catalysis. Complex I functions in the transfer of electrons from NADH to the respiratory chain. The immediate electron acceptor for the enzyme is believed to be ubiquinone. This chain is NADH-ubiquinone oxidoreductase chain 4 (MT-ND4), found in Crotalus adamanteus (Eastern diamondback rattlesnake).